The sequence spans 126 residues: RutC family protein y4sK (126 aa).

The protein belongs to the RutC family.

This chain is RutC family protein y4sK, found in Sinorhizobium fredii (strain NBRC 101917 / NGR234).